Here is a 314-residue protein sequence, read N- to C-terminus: 3'-5' exoribonuclease YhaM (314 aa).

Residues His163–Lys279 enclose the HD domain.

Belongs to the YhaM family.

Functionally, shows a 3'-5' exoribonuclease activity. The polypeptide is 3'-5' exoribonuclease YhaM (Bacillus cereus (strain 03BB102)).